The chain runs to 228 residues: Immunogenic protein MPB64 (228 aa).

An N-terminal signal peptide occupies residues 1–23 (MRIKIFMLVTAVVLLCCSGVATA).

The protein belongs to the RsiV family.

It localises to the secreted. The sequence is that of Immunogenic protein MPB64 (mpb64) from Mycobacterium bovis (strain ATCC BAA-935 / AF2122/97).